The chain runs to 191 residues: Elongation factor P (191 aa).

Belongs to the elongation factor P family.

The protein resides in the cytoplasm. The protein operates within protein biosynthesis; polypeptide chain elongation. Its function is as follows. Involved in peptide bond synthesis. Stimulates efficient translation and peptide-bond synthesis on native or reconstituted 70S ribosomes in vitro. Probably functions indirectly by altering the affinity of the ribosome for aminoacyl-tRNA, thus increasing their reactivity as acceptors for peptidyl transferase. This Janthinobacterium sp. (strain Marseille) (Minibacterium massiliensis) protein is Elongation factor P.